We begin with the raw amino-acid sequence, 118 residues long: Small ribosomal subunit protein uS13 (118 aa).

Residues 93–118 (RNLPVRGQRSKTNARTRKGPRKPIKR) form a disordered region.

It belongs to the universal ribosomal protein uS13 family. Part of the 30S ribosomal subunit. Forms a loose heterodimer with protein S19. Forms two bridges to the 50S subunit in the 70S ribosome.

Its function is as follows. Located at the top of the head of the 30S subunit, it contacts several helices of the 16S rRNA. In the 70S ribosome it contacts the 23S rRNA (bridge B1a) and protein L5 of the 50S subunit (bridge B1b), connecting the 2 subunits; these bridges are implicated in subunit movement. Contacts the tRNAs in the A and P-sites. The sequence is that of Small ribosomal subunit protein uS13 from Saccharophagus degradans (strain 2-40 / ATCC 43961 / DSM 17024).